Consider the following 366-residue polypeptide: Cobalt-precorrin-5B C(1)-methyltransferase (366 aa).

It belongs to the CbiD family.

The enzyme catalyses Co-precorrin-5B + S-adenosyl-L-methionine = Co-precorrin-6A + S-adenosyl-L-homocysteine. It participates in cofactor biosynthesis; adenosylcobalamin biosynthesis; cob(II)yrinate a,c-diamide from sirohydrochlorin (anaerobic route): step 6/10. Catalyzes the methylation of C-1 in cobalt-precorrin-5B to form cobalt-precorrin-6A. The chain is Cobalt-precorrin-5B C(1)-methyltransferase from Hahella chejuensis (strain KCTC 2396).